We begin with the raw amino-acid sequence, 530 residues long: Netrin-G2 (530 aa).

The signal sequence occupies residues 1 to 17; that stretch reads MLHLLALFLHCLPLASG. 3 disulfide bridges follow: cysteine 22/cysteine 39, cysteine 61/cysteine 81, and cysteine 69/cysteine 77. Positions 35 to 286 constitute a Laminin N-terminal domain; it reads EFYACQPKVM…AISNIEVIGR (252 aa). The segment at 69 to 88 is NGL discriminant loop I; sequence CSHENPYLCSNECDASNPDL. Asparagine 122 and asparagine 128 each carry an N-linked (GlcNAc...) asparagine glycan. Cysteines 171 and 195 form a disulfide. The interval 201-203 is NGL discriminant loop II; the sequence is RWA. The NGL discriminant loop III stretch occupies residues 264 to 267; it reads TYVQ. 15 disulfide bridges follow: cysteine 287–cysteine 296, cysteine 289–cysteine 305, cysteine 307–cysteine 316, cysteine 319–cysteine 344, cysteine 353–cysteine 362, cysteine 355–cysteine 373, cysteine 376–cysteine 385, cysteine 388–cysteine 406, cysteine 409–cysteine 421, cysteine 411–cysteine 427, cysteine 429–cysteine 438, cysteine 441–cysteine 451, cysteine 456–cysteine 469, cysteine 463–cysteine 475, and cysteine 477–cysteine 486. Laminin EGF-like domains lie at 287–346, 353–408, and 409–453; these read CKCN…ACAT, CECY…VCIE, and CNCN…GCYP. N-linked (GlcNAc...) asparagine glycosylation is present at asparagine 310. N-linked (GlcNAc...) asparagine glycosylation occurs at asparagine 395. Asparagine 422 carries an N-linked (GlcNAc...) asparagine glycan. A lipid anchor (GPI-anchor amidated glycine) is attached at glycine 507. Positions 508–530 are cleaved as a propeptide — removed in mature form; it reads AAPRPATLLGCLLLLGLAARLGR.

As to quaternary structure, interacts with LRRC4. Post-translationally, N-glycosylated.

Its subcellular location is the cell membrane. In terms of biological role, involved in controlling patterning and neuronal circuit formation at the laminar, cellular, subcellular and synaptic levels. Promotes neurite outgrowth of both axons and dendrites. This chain is Netrin-G2, found in Homo sapiens (Human).